The following is a 97-amino-acid chain: UPF0235 protein cbdbA1230 (97 aa).

The protein belongs to the UPF0235 family.

The chain is UPF0235 protein cbdbA1230 from Dehalococcoides mccartyi (strain CBDB1).